Reading from the N-terminus, the 181-residue chain is MKLLFDFFPIVLFFIVYKFFGIYTATAVAMVASLTQVAFYRLKFQHYEKMHLFSLAIIMVLGGATLFFQNPWFIKWKPTGIYWLSALVFYGSGYIGSKPLIQKMMEANINLTTKIWYRLNLAWTLFFIVMGALNLYVAYHYDTDVWVNFKLFGGVGFTLLFVLIQAFYLTKHTDEKSFEKQ.

Transmembrane regions (helical) follow at residues Leu3–Tyr23, Ser54–Ile74, Ile81–Ile101, Leu119–Tyr139, and Phe149–Leu169.

It belongs to the YciB family.

It localises to the cell inner membrane. Its function is as follows. Plays a role in cell envelope biogenesis, maintenance of cell envelope integrity and membrane homeostasis. The chain is Inner membrane-spanning protein YciB from Legionella pneumophila (strain Corby).